Reading from the N-terminus, the 171-residue chain is S-ribosylhomocysteine lyase (171 aa).

Fe cation contacts are provided by histidine 54, histidine 58, and cysteine 128.

The protein belongs to the LuxS family. In terms of assembly, homodimer. Fe cation serves as cofactor.

It catalyses the reaction S-(5-deoxy-D-ribos-5-yl)-L-homocysteine = (S)-4,5-dihydroxypentane-2,3-dione + L-homocysteine. Functionally, involved in the synthesis of autoinducer 2 (AI-2) which is secreted by bacteria and is used to communicate both the cell density and the metabolic potential of the environment. The regulation of gene expression in response to changes in cell density is called quorum sensing. Catalyzes the transformation of S-ribosylhomocysteine (RHC) to homocysteine (HC) and 4,5-dihydroxy-2,3-pentadione (DPD). The protein is S-ribosylhomocysteine lyase of Citrobacter koseri (strain ATCC BAA-895 / CDC 4225-83 / SGSC4696).